Here is a 448-residue protein sequence, read N- to C-terminus: Damage-control phosphatase ARMT1 (448 aa).

Mn(2+) is bound by residues Asp257 and Asn258. Position 257 to 258 (Asp257 to Asn258) interacts with substrate. S-adenosyl-L-methionine-binding residues include Glu262 and Asp295. Asp295 provides a ligand contact to Mn(2+). Substrate-binding positions include Asp371–Arg375 and Lys408. Residues Arg405–Lys408 carry the Subfamily III RTxK motif motif.

This sequence belongs to the damage-control phosphatase family. Sugar phosphate phosphatase III subfamily. It depends on Mn(2+) as a cofactor. Requires Ni(2+) as cofactor. Automethylated.

The enzyme catalyses beta-D-fructose 1-phosphate + H2O = D-fructose + phosphate. The catalysed reaction is beta-D-fructose 6-phosphate = dihydroxyacetone + D-glyceraldehyde 3-phosphate. It catalyses the reaction L-glutamyl-[protein] + S-adenosyl-L-methionine = [protein]-L-glutamate 5-O-methyl ester + S-adenosyl-L-homocysteine. Functionally, metal-dependent phosphatase that shows phosphatase activity against several substrates, including fructose-1-phosphate and fructose-6-phosphate. Its preference for fructose-1-phosphate, a strong glycating agent that causes DNA damage rather than a canonical yeast metabolite, suggests a damage-control function in hexose phosphate metabolism. Has also been shown to have O-methyltransferase activity that methylates glutamate residues of target proteins to form gamma-glutamyl methyl ester residues. Possibly methylates PCNA, suggesting it is involved in the DNA damage response. The chain is Damage-control phosphatase ARMT1 from Danio rerio (Zebrafish).